We begin with the raw amino-acid sequence, 170 residues long: Group 2 truncated hemoglobin 3-1 (170 aa).

Residue His-98 participates in heme b binding.

This sequence belongs to the truncated hemoglobin family. Group II subfamily. In terms of assembly, homodimer when ferric.

Its function is as follows. Hemoglobin-like protein that exhibits an unusual concentration-independent binding of O(2) and CO. Required for general plant development and during nodulation. May promote shoot organogenesis from root explants. The sequence is that of Group 2 truncated hemoglobin 3-1 from Medicago truncatula (Barrel medic).